The following is a 366-amino-acid chain: uncharacterized protein (366 aa).

Residues 63–288 (ARVAMVGFPS…LLEKMWEYLA (226 aa)) enclose the OBG-type G domain. Residues 69–76 (GFPSVGKS), 115–119 (DLPGI), and 246–249 (NKVD) contribute to the GTP site. The 78-residue stretch at 288-365 (ALVRVYTKKP…DHEDVIQIVK (78 aa)) folds into the TGS domain.

The protein belongs to the TRAFAC class OBG-HflX-like GTPase superfamily. OBG GTPase family.

This is an uncharacterized protein from Caenorhabditis elegans.